A 463-amino-acid chain; its full sequence is Cysteine--tRNA ligase (463 aa).

Position 33 (Cys33) interacts with Zn(2+). A 'HIGH' region motif is present at residues 35-45 (PTVYDFAHIGN). Residues Cys221, His246, and Glu250 each coordinate Zn(2+). Residues 279–283 (KMSKS) carry the 'KMSKS' region motif. Lys282 contributes to the ATP binding site.

It belongs to the class-I aminoacyl-tRNA synthetase family. As to quaternary structure, monomer. It depends on Zn(2+) as a cofactor.

It localises to the cytoplasm. The enzyme catalyses tRNA(Cys) + L-cysteine + ATP = L-cysteinyl-tRNA(Cys) + AMP + diphosphate. In Rhizobium johnstonii (strain DSM 114642 / LMG 32736 / 3841) (Rhizobium leguminosarum bv. viciae), this protein is Cysteine--tRNA ligase.